Consider the following 239-residue polypeptide: Pyridoxine 5'-phosphate synthase (239 aa).

N7 is a 3-amino-2-oxopropyl phosphate binding site. Position 9–10 (9–10) interacts with 1-deoxy-D-xylulose 5-phosphate; that stretch reads DH. R18 is a binding site for 3-amino-2-oxopropyl phosphate. H43 functions as the Proton acceptor in the catalytic mechanism. 1-deoxy-D-xylulose 5-phosphate is bound by residues R45 and H50. E70 functions as the Proton acceptor in the catalytic mechanism. Position 100 (T100) interacts with 1-deoxy-D-xylulose 5-phosphate. H191 functions as the Proton donor in the catalytic mechanism. Residues G192 and 213 to 214 contribute to the 3-amino-2-oxopropyl phosphate site; that span reads GH.

It belongs to the PNP synthase family. Homooctamer; tetramer of dimers.

The protein localises to the cytoplasm. The enzyme catalyses 3-amino-2-oxopropyl phosphate + 1-deoxy-D-xylulose 5-phosphate = pyridoxine 5'-phosphate + phosphate + 2 H2O + H(+). It participates in cofactor biosynthesis; pyridoxine 5'-phosphate biosynthesis; pyridoxine 5'-phosphate from D-erythrose 4-phosphate: step 5/5. Its function is as follows. Catalyzes the complicated ring closure reaction between the two acyclic compounds 1-deoxy-D-xylulose-5-phosphate (DXP) and 3-amino-2-oxopropyl phosphate (1-amino-acetone-3-phosphate or AAP) to form pyridoxine 5'-phosphate (PNP) and inorganic phosphate. In Gloeobacter violaceus (strain ATCC 29082 / PCC 7421), this protein is Pyridoxine 5'-phosphate synthase.